The sequence spans 116 residues: Small ribosomal subunit protein bS16 (116 aa).

This sequence belongs to the bacterial ribosomal protein bS16 family.

The protein is Small ribosomal subunit protein bS16 of Chlamydia trachomatis serovar A (strain ATCC VR-571B / DSM 19440 / HAR-13).